Consider the following 190-residue polypeptide: uncharacterized protein (190 aa).

Disordered stretches follow at residues 1–21 (MALR…ATVG) and 155–190 (PEMG…TQAS). Residues 181 to 190 (SPSSHPTQAS) show a composition bias toward low complexity.

This is an uncharacterized protein from Homo sapiens (Human).